Consider the following 282-residue polypeptide: Pantothenate synthetase (282 aa).

An ATP-binding site is contributed by 30 to 37; sequence MGNLHDGH. Catalysis depends on His37, which acts as the Proton donor. Gln61 serves as a coordination point for (R)-pantoate. Residue Gln61 participates in beta-alanine binding. 149 to 152 is an ATP binding site; it reads GEKD. A (R)-pantoate-binding site is contributed by Gln155. Residue 186-189 coordinates ATP; it reads MSSR.

Belongs to the pantothenate synthetase family. As to quaternary structure, homodimer.

The protein localises to the cytoplasm. It carries out the reaction (R)-pantoate + beta-alanine + ATP = (R)-pantothenate + AMP + diphosphate + H(+). The protein operates within cofactor biosynthesis; (R)-pantothenate biosynthesis; (R)-pantothenate from (R)-pantoate and beta-alanine: step 1/1. Functionally, catalyzes the condensation of pantoate with beta-alanine in an ATP-dependent reaction via a pantoyl-adenylate intermediate. The chain is Pantothenate synthetase from Alteromonas mediterranea (strain DSM 17117 / CIP 110805 / LMG 28347 / Deep ecotype).